The following is a 75-amino-acid chain: MLIPHDQLESDTLTRLIEDFVTRDGTDNGDETPLDTRVARVRRALDRGEAVIVFDADSQQCQLALKRDVPREWLD.

It belongs to the UPF0270 family.

The sequence is that of UPF0270 protein PST_1436 from Stutzerimonas stutzeri (strain A1501) (Pseudomonas stutzeri).